A 262-amino-acid polypeptide reads, in one-letter code: Putative phosphatase HI_0003 (262 aa).

Aspartate 9 acts as the Nucleophile in catalysis. The Mg(2+) site is built by aspartate 9 and asparagine 11. Residues 43–44 (SA) and lysine 189 contribute to the phosphate site. Aspartate 212 is a Mg(2+) binding site. Residue asparagine 215 participates in phosphate binding.

This sequence belongs to the HAD-like hydrolase superfamily. Cof family. Mg(2+) is required as a cofactor.

In Haemophilus influenzae (strain ATCC 51907 / DSM 11121 / KW20 / Rd), this protein is Putative phosphatase HI_0003.